The following is a 182-amino-acid chain: A-type ATP synthase subunit E (182 aa).

Belongs to the V-ATPase E subunit family. As to quaternary structure, has multiple subunits with at least A(3), B(3), C, D, E, F, H, I and proteolipid K(x).

The protein resides in the cell membrane. Functionally, component of the A-type ATP synthase that produces ATP from ADP in the presence of a proton gradient across the membrane. The polypeptide is A-type ATP synthase subunit E (Methanothrix thermoacetophila (strain DSM 6194 / JCM 14653 / NBRC 101360 / PT) (Methanosaeta thermophila)).